The following is a 141-amino-acid chain: ATP synthase epsilon chain (141 aa).

Belongs to the ATPase epsilon chain family. In terms of assembly, F-type ATPases have 2 components, CF(1) - the catalytic core - and CF(0) - the membrane proton channel. CF(1) has five subunits: alpha(3), beta(3), gamma(1), delta(1), epsilon(1). CF(0) has three main subunits: a, b and c.

The protein resides in the cell membrane. Its function is as follows. Produces ATP from ADP in the presence of a proton gradient across the membrane. The chain is ATP synthase epsilon chain from Lactococcus lactis subsp. cremoris (strain MG1363).